The following is a 321-amino-acid chain: Olfactory receptor 5K4 (321 aa).

The Extracellular portion of the chain corresponds to 1–25; the sequence is MARENHSLAAEFILIGFTNYPELKT. Asparagine 5 is a glycosylation site (N-linked (GlcNAc...) asparagine). A helical transmembrane segment spans residues 26–46; that stretch reads LLFVVFSAIYLVTMVGNLGLV. At 47-54 the chain is on the cytoplasmic side; it reads ALIYVERR. The chain crosses the membrane as a helical span at residues 55–75; it reads LLTPMYIFLGNLALMDSCCSC. Topologically, residues 76–97 are extracellular; the sequence is AVTPKMLENFFSEDRIISLYEC. Cysteine 97 and cysteine 179 are joined by a disulfide. A helical membrane pass occupies residues 98–118; it reads MAQFYFLCLAETTDCFLLATM. Residues 119–139 are Cytoplasmic-facing; it reads AYDRYVAICHPLQYHTMMSKT. Residues 140–160 form a helical membrane-spanning segment; sequence LCIRMTTGAFKAGNLHSMIHV. At 161–205 the chain is on the extracellular side; it reads GLLLRLTFCRSNKIHHFFCDILPLYRLSCTDPSINELMIYIFSIP. The helical transmembrane segment at 206-226 threads the bilayer; that stretch reads IQIFTIATVLISYLCILLTVF. Topologically, residues 227–240 are cytoplasmic; it reads KMKSKEGRGKAFST. A helical transmembrane segment spans residues 241-261; sequence CASHFLSVSIFYICLLMYIGP. The Extracellular portion of the chain corresponds to 262–268; it reads SEEGDKD. Residues 269 to 289 traverse the membrane as a helical segment; that stretch reads TPVAIFYAIVIPLLNPFIYSL. At 290-321 the chain is on the cytoplasmic side; it reads RNKEVINVLKKIMRNYNILKQTCSIANLFLIY.

Belongs to the G-protein coupled receptor 1 family.

It is found in the cell membrane. Odorant receptor. The protein is Olfactory receptor 5K4 (OR5K4) of Homo sapiens (Human).